A 30-amino-acid polypeptide reads, in one-letter code: Cyclotide hyen-L (30 aa).

The segment at residues 1–30 is a cross-link (cyclopeptide (Gly-Asn)); sequence GIPCAESCVYIPCTVTALLGCSCSDKVCYN. 3 disulfides stabilise this stretch: cysteine 4/cysteine 21, cysteine 8/cysteine 23, and cysteine 13/cysteine 28.

Post-translationally, this is a cyclic peptide. As to expression, detected in stems (at protein level).

In terms of biological role, probably participates in a plant defense mechanism. Has cytotoxic activity against HUVEC cells (LC(50)= 2.26 uM) and various cancer cells including HeLa (LC(50)= 3.48 uM), MCF-7 and K562. Displays very weak hemolytic activity. Binds to and induces leakage in phospholipd membranes, particularly ones containing 1-palmitoyl-2-oleophosphatidylethanolamine (POPE). This chain is Cyclotide hyen-L, found in Pigea enneasperma (Spade flower).